We begin with the raw amino-acid sequence, 192 residues long: UPF0149 protein YgfB (192 aa).

Belongs to the UPF0149 family.

In Salmonella agona (strain SL483), this protein is UPF0149 protein YgfB.